Reading from the N-terminus, the 97-residue chain is uncharacterized protein (97 aa).

A compositionally biased stretch (basic and acidic residues) spans 1–20; the sequence is MAKEQTDRTTLDLFAHERRP. Positions 1–30 are disordered; that stretch reads MAKEQTDRTTLDLFAHERRPGRPKTNPLSR.

This is an uncharacterized protein from Escherichia coli O157:H7.